The primary structure comprises 1090 residues: Exoglucanase B (1090 aa).

An N-terminal signal peptide occupies residues 1-33 (MSSTTRRRSAWVAAATVGVSSFLAVAGITPAIA). A propeptide spanning residues 34–53 (AAGAGQPATVTVPAASPVRA) is cleaved from the precursor. Residues 54-699 (AVDGEYAQRF…RLFDDGTTTP (646 aa)) form a catalytic region. The active-site Nucleophile is the Asp513. Fibronectin type-III domains are found at residues 706–791 (VPTG…TKAT), 797–887 (APSV…TKSD), and 897–984 (VPAG…TKTP). In terms of domain architecture, CBM2 spans 983-1090 (TPQTGGSCSV…SFTLNGASCT (108 aa)). Residues Cys990 and Cys1089 are joined by a disulfide bond. The interval 1069 to 1090 (NGSHTGQNPNPASFTLNGASCT) is disordered. A compositionally biased stretch (polar residues) spans 1070 to 1090 (GSHTGQNPNPASFTLNGASCT).

It belongs to the glycosyl hydrolase 48 (cellulase L) family.

It catalyses the reaction Hydrolysis of (1-&gt;4)-beta-D-glucosidic linkages in cellulose and cellotetraose, releasing cellobiose from the non-reducing ends of the chains.. Its function is as follows. Hydrolyzes cellohexaose to a mixture of cellotetraose, cellotriose and cellobiose, with only a trace of glucose. It hydrolyzed cellopentaose to cellotriose and cellobiose, and cellotetraose to cellobiose, but it did not hydrolyze cellotriose. Also has weak endoglucanase activity. Hydrolyzes glucosidic bonds with inversion of anomeric configuration. This chain is Exoglucanase B (cbhB), found in Cellulomonas fimi (strain ATCC 484 / DSM 20113 / JCM 1341 / CCUG 24087 / LMG 16345 / NBRC 15513 / NCIMB 8980 / NCTC 7547 / NRS-133).